The sequence spans 186 residues: Adenylyl-sulfate kinase (186 aa).

Position 17 to 24 (17 to 24 (GLSGAGKT)) interacts with ATP. The active-site Phosphoserine intermediate is Ser91.

This sequence belongs to the APS kinase family.

The catalysed reaction is adenosine 5'-phosphosulfate + ATP = 3'-phosphoadenylyl sulfate + ADP + H(+). It participates in sulfur metabolism; hydrogen sulfide biosynthesis; sulfite from sulfate: step 2/3. Catalyzes the synthesis of activated sulfate. This is Adenylyl-sulfate kinase from Chloroflexus aurantiacus (strain ATCC 29364 / DSM 637 / Y-400-fl).